The following is a 346-amino-acid chain: dTDP-glucose 4,6-dehydratase (346 aa).

Residues Phe17–Ile18, Asp38–Thr41, Asp64–Ile65, Leu86–Ser90, and Thr105 each bind NAD(+). Ser90 is a binding site for substrate. Residue Thr139 coordinates substrate. The active-site Proton donor is Asp140. Catalysis depends on proton acceptor residues Glu141 and Tyr165. Tyr165 to Lys169 provides a ligand contact to NAD(+). Asn194 provides a ligand contact to substrate. Position 195 (Asn195) interacts with NAD(+). Residues Lys204–Leu205, Pro220–Tyr222, Arg229, Asn264, and Asp298–His302 contribute to the substrate site.

The protein belongs to the NAD(P)-dependent epimerase/dehydratase family. dTDP-glucose dehydratase subfamily. In terms of assembly, homodimer. NAD(+) is required as a cofactor.

The enzyme catalyses dTDP-alpha-D-glucose = dTDP-4-dehydro-6-deoxy-alpha-D-glucose + H2O. It functions in the pathway carbohydrate biosynthesis; dTDP-L-rhamnose biosynthesis. The protein operates within bacterial outer membrane biogenesis; LPS O-antigen biosynthesis. Its function is as follows. Catalyzes the dehydration of dTDP-D-glucose to form dTDP-6-deoxy-D-xylo-4-hexulose via a three-step process involving oxidation, dehydration and reduction. In Neisseria gonorrhoeae, this protein is dTDP-glucose 4,6-dehydratase.